The sequence spans 417 residues: Putative transporter AmpG 1 (417 aa).

A run of 12 helical transmembrane segments spans residues 7–27 (LCII…TGNT), 42–62 (IGIL…APIF), 78–98 (LSWI…FSFL), 104–124 (LLLF…QDTI), 143–163 (GIYI…AIYL), 171–191 (EIYK…IVGI), 225–245 (ALKP…LVLY), 273–293 (VGKF…GVIM), 301–321 (SIFL…FLEI), 328–348 (LLFI…TAYI), 366–386 (FLSS…GYMV), and 389–409 (FGWQ…LLIL).

This sequence belongs to the major facilitator superfamily.

The protein resides in the cell inner membrane. This chain is Putative transporter AmpG 1 (ampG1), found in Rickettsia conorii (strain ATCC VR-613 / Malish 7).